A 255-amino-acid polypeptide reads, in one-letter code: Dehydrogenase/reductase SDR family member 11 (255 aa).

The signal sequence occupies residues 1 to 25 (MERWRDRLALVTGASGGIGAAVARA). NADP(+) contacts are provided by residues 13 to 18 (GASGGI), 38 to 39 (RT), glutamate 44, 65 to 66 (DL), and asparagine 92. Substrate-binding residues include serine 146 and tyrosine 161. NADP(+) is bound by residues tyrosine 161, lysine 165, 196-199 (VETQ), and lysine 203. The active-site Proton acceptor is the tyrosine 161.

It belongs to the short-chain dehydrogenases/reductases (SDR) family.

The protein resides in the secreted. The catalysed reaction is a 3beta-hydroxysteroid + NADP(+) = a 3-oxosteroid + NADPH + H(+). It carries out the reaction 17beta-estradiol + NAD(+) = estrone + NADH + H(+). It catalyses the reaction 17beta-estradiol + NADP(+) = estrone + NADPH + H(+). The protein operates within steroid biosynthesis; estrogen biosynthesis. Inhibited by flavonoids including apigenin, luteolin, genistein, kaempferol and quercetin and also by carbenoxolone, zearalenone, glycyrrhetinic, curcumin and flufenamic acid. In terms of biological role, catalyzes the conversion of the 17-keto group of estrone, 4- and 5-androstenes and 5-alpha-androstanes into their 17-beta-hydroxyl metabolites and the conversion of the 3-keto group of 3-, 3,17- and 3,20- diketosteroids into their 3-hydroxyl metabolites. Exhibits reductive 3-beta-hydroxysteroid dehydrogenase activity toward 5-beta-androstanes, 5-beta-pregnanes, 4-pregnenes and bile acids. May also reduce endogenous and exogenous alpha-dicarbonyl compounds and xenobiotic alicyclic ketones. This chain is Dehydrogenase/reductase SDR family member 11 (DHRS11), found in Bos taurus (Bovine).